The primary structure comprises 604 residues: Netrin-1 (604 aa).

Positions 1–24 (MMRAVWEALAALAAVACLVGAVRG) are cleaved as a signal peptide. The Laminin N-terminal domain occupies 47-284 (HPRRCIPDFV…AVSDLQVGGR (238 aa)). Residues asparagine 95, asparagine 116, and asparagine 131 are each glycosylated (N-linked (GlcNAc...) asparagine). 15 disulfide bridges follow: cysteine 119–cysteine 152, cysteine 285–cysteine 294, cysteine 287–cysteine 304, cysteine 306–cysteine 315, cysteine 318–cysteine 338, cysteine 341–cysteine 350, cysteine 343–cysteine 368, cysteine 371–cysteine 380, cysteine 383–cysteine 401, cysteine 404–cysteine 416, cysteine 406–cysteine 423, cysteine 425–cysteine 434, cysteine 437–cysteine 451, cysteine 472–cysteine 544, and cysteine 491–cysteine 601. 3 consecutive Laminin EGF-like domains span residues 285–340 (CKCN…ECVA), 341–403 (CNCN…ACKA), and 404–453 (CDCH…PCIK). N-linked (GlcNAc...) asparagine glycosylation occurs at asparagine 417. Positions 472–601 (CDSYCKASKG…FQQREKKGKC (130 aa)) constitute an NTR domain. Positions 530-532 (RGD) match the Cell attachment site motif.

As to quaternary structure, binds to its receptors; DCC, UNC5A, UNC5B, UNC5C and probably UNC5D. Binds to its receptor; DSCAM. Interacts with DCC. Interacts with APP. As to expression, widely expressed in normal adult tissues with highest levels in heart, small intestine, colon, liver and prostate. Reduced expression in brain tumors and neuroblastomas. Expressed in epididymis (at protein level).

The protein resides in the secreted. Its subcellular location is the cytoplasm. Its function is as follows. Netrins control guidance of CNS commissural axons and peripheral motor axons. Its association with either DCC or some UNC5 receptors will lead to axon attraction or repulsion, respectively. Binding to UNC5C might cause dissociation of UNC5C from polymerized TUBB3 in microtubules and thereby lead to increased microtubule dynamics and axon repulsion. Involved in dorsal root ganglion axon projection towards the spinal cord. It also serves as a survival factor via its association with its receptors which prevent the initiation of apoptosis. Involved in tumorigenesis by regulating apoptosis. This Homo sapiens (Human) protein is Netrin-1 (NTN1).